A 59-amino-acid chain; its full sequence is uncharacterized protein (59 aa).

It is found in the mitochondrion. This is an uncharacterized protein from Ascobolus immersus.